Reading from the N-terminus, the 295-residue chain is Delta-1-pyrroline-5-carboxylate reductase apf3 (295 aa).

This sequence belongs to the pyrroline-5-carboxylate reductase family.

It participates in secondary metabolite biosynthesis. Its function is as follows. Delta-1-pyrroline-5-carboxylate reductase; part of the gene cluster that mediates the biosynthesis of the cyclic tetrapeptide apicidin F (APF). The non-ribosomal peptide synthetase apf1 incorporates four different amino acids to produce apicidin F: L-phenylalanine, D-pipecolic acid (D-pip), N-methoxy-L-tryptophan and L-2-aminooctanedioic acid. L-Phenylalanine is the only proteinogenic amino acid directly used by apf1. The 3 other apf1 substrates are non-proteinogenic and have to be modified by other enzymes of the cluster. Lysine is converted to delta-1-pyrroline-5-carboxylate (P5C) which is reduced to L-pipecolic acid (L-pip) by apf3. L-pip is epimerized to D-pip, probably by apf1 activity, prior to incorporation. L-Tryptophan is N-oxidyzed by one of the cytochrome P450 monooxygenases (apf7 or apf8), and further methylated at the hydroxy group by the O-methyltransferase apf6 to yield N-methoxy-L-tryptophan. The synthesis of the fourth apf1 substrate is more complex. The fatty acid synthase apf5 is involved in the synthesis of the octanoic acid backbone of L-2-aminooctanedioic acid by fixing one acetyl-CoA unit and three malonyl-CoA units. Then one of the cytochrome P450 monooxygenases (apf7 or apf8) may oxidize this backbone to 2-oxooctanoic acid. The aminotransferase apf4 is predicted to catalyze the exchange of the keto group with an amino group. The next step would be the oxidation of 2-aminooctanoic acid by one of the cytochrome P450 monooxygenases (apf7 or apf8). The last step is the oxidation of 2-amino-8-hydroxyoctanoic acid to 2-aminooctanedioic acid is catalyzed by the FAD-dependent monooxygenase apf9. This chain is Delta-1-pyrroline-5-carboxylate reductase apf3, found in Gibberella fujikuroi (strain CBS 195.34 / IMI 58289 / NRRL A-6831) (Bakanae and foot rot disease fungus).